We begin with the raw amino-acid sequence, 40 residues long: MQKPSGKGLKYFAYGVAISAAGAILAEYVRDWMRKPKAKS.

Residues 10 to 29 (KYFAYGVAISAAGAILAEYV) form a helical membrane-spanning segment.

The protein resides in the virion membrane. May interact with the viral DNA. The protein is Protein P4 (IV) of Pseudoalteromonas phage PM2 (Bacteriophage PM2).